The chain runs to 178 residues: Adenine phosphoribosyltransferase (178 aa).

It belongs to the purine/pyrimidine phosphoribosyltransferase family. In terms of assembly, homodimer.

It localises to the cytoplasm. The catalysed reaction is AMP + diphosphate = 5-phospho-alpha-D-ribose 1-diphosphate + adenine. Its pathway is purine metabolism; AMP biosynthesis via salvage pathway; AMP from adenine: step 1/1. Functionally, catalyzes a salvage reaction resulting in the formation of AMP, that is energically less costly than de novo synthesis. This is Adenine phosphoribosyltransferase from Helicobacter hepaticus (strain ATCC 51449 / 3B1).